A 220-amino-acid polypeptide reads, in one-letter code: Large ribosomal subunit protein uL3 (220 aa).

It belongs to the universal ribosomal protein uL3 family. Part of the 50S ribosomal subunit. Forms a cluster with proteins L14 and L19.

Functionally, one of the primary rRNA binding proteins, it binds directly near the 3'-end of the 23S rRNA, where it nucleates assembly of the 50S subunit. The polypeptide is Large ribosomal subunit protein uL3 (Staphylococcus haemolyticus (strain JCSC1435)).